A 218-amino-acid polypeptide reads, in one-letter code: MLFISATNTNAGKTTCARLLAQYCNACGVRTILLKPIETGVNDTTNHFSDVHLFLQDNRLLDRSLTLKDISFYRYAKASAPLIAQQEENQNAPIDTNDLIQRLQNFTKTYDLVIVEGAGGLCVPITLEENMLDLALKLKAKILVISHDNLGLINDCLLNDFLLKSHQLDYKIAINLRENNAAFHSVSLPYIELFNERSNNPIVIFQQSLKELMSFALK.

ATP is bound at residue 10 to 15 (NAGKTT). Threonine 14 provides a ligand contact to Mg(2+). The active site involves lysine 35. Threonine 39 is a binding site for substrate. 2 residues coordinate Mg(2+): histidine 52 and glutamate 116. ATP is bound by residues 116–119 (EGAG) and 176–177 (LR).

It belongs to the dethiobiotin synthetase family. As to quaternary structure, homodimer. Mg(2+) is required as a cofactor.

Its subcellular location is the cytoplasm. The enzyme catalyses (7R,8S)-7,8-diammoniononanoate + CO2 + ATP = (4R,5S)-dethiobiotin + ADP + phosphate + 3 H(+). Its pathway is cofactor biosynthesis; biotin biosynthesis; biotin from 7,8-diaminononanoate: step 1/2. Functionally, catalyzes a mechanistically unusual reaction, the ATP-dependent insertion of CO2 between the N7 and N8 nitrogen atoms of 7,8-diaminopelargonic acid (DAPA, also called 7,8-diammoniononanoate) to form a ureido ring. This chain is ATP-dependent dethiobiotin synthetase BioD, found in Helicobacter pylori (strain Shi470).